Here is a 276-residue protein sequence, read N- to C-terminus: Pyrroline-5-carboxylate reductase (276 aa).

This sequence belongs to the pyrroline-5-carboxylate reductase family.

The protein localises to the cytoplasm. The catalysed reaction is L-proline + NADP(+) = (S)-1-pyrroline-5-carboxylate + NADPH + 2 H(+). It catalyses the reaction L-proline + NAD(+) = (S)-1-pyrroline-5-carboxylate + NADH + 2 H(+). The protein operates within amino-acid biosynthesis; L-proline biosynthesis; L-proline from L-glutamate 5-semialdehyde: step 1/1. This Arabidopsis thaliana (Mouse-ear cress) protein is Pyrroline-5-carboxylate reductase (PROC1).